The primary structure comprises 308 residues: NAD-dependent protein deacylase SIR4 (308 aa).

A mitochondrion-targeting transit peptide spans Met-1–Ala-16. Positions Thr-28–Leu-308 constitute a Deacetylase sirtuin-type domain. NAD(+) is bound by residues Gly-53–His-73 and Gln-129–Asp-132. Catalysis depends on His-147, which acts as the Proton acceptor. Cys-155, Cys-158, Cys-211, and Cys-214 together coordinate Zn(2+). NAD(+)-binding positions include Gly-251 to Ser-253, Asn-277 to Gly-279, and Ile-297.

This sequence belongs to the sirtuin family. Class II subfamily. It depends on Zn(2+) as a cofactor.

The protein resides in the mitochondrion matrix. The catalysed reaction is N(6)-acetyl-L-lysyl-[protein] + NAD(+) + H2O = 2''-O-acetyl-ADP-D-ribose + nicotinamide + L-lysyl-[protein]. Its function is as follows. NAD-dependent protein deacylase. Catalyzes the NAD-dependent hydrolysis of acyl groups from lysine residues. In Monosiga brevicollis (Choanoflagellate), this protein is NAD-dependent protein deacylase SIR4.